Reading from the N-terminus, the 264-residue chain is Triosephosphate isomerase (264 aa).

Residue 13-15 (NWK) coordinates substrate. The active-site Electrophile is the His-106. The active-site Proton acceptor is the Glu-179. Residues Gly-185, Ser-223, and 244-245 (GG) contribute to the substrate site.

The protein belongs to the triosephosphate isomerase family. In terms of assembly, homodimer.

The protein resides in the cytoplasm. It carries out the reaction D-glyceraldehyde 3-phosphate = dihydroxyacetone phosphate. Its pathway is carbohydrate biosynthesis; gluconeogenesis. It functions in the pathway carbohydrate degradation; glycolysis; D-glyceraldehyde 3-phosphate from glycerone phosphate: step 1/1. Its function is as follows. Involved in the gluconeogenesis. Catalyzes stereospecifically the conversion of dihydroxyacetone phosphate (DHAP) to D-glyceraldehyde-3-phosphate (G3P). This chain is Triosephosphate isomerase, found in Acinetobacter baumannii (strain SDF).